Here is a 465-residue protein sequence, read N- to C-terminus: Glutamate--tRNA ligase (465 aa).

Residues 11–21 carry the 'HIGH' region motif; it reads PSPTGFIHLGN. A 'KMSKS' region motif is present at residues 243-247; it reads KMSKR. Position 246 (lysine 246) interacts with ATP.

Belongs to the class-I aminoacyl-tRNA synthetase family. Glutamate--tRNA ligase type 1 subfamily. As to quaternary structure, monomer.

Its subcellular location is the cytoplasm. It catalyses the reaction tRNA(Glu) + L-glutamate + ATP = L-glutamyl-tRNA(Glu) + AMP + diphosphate. Functionally, catalyzes the attachment of glutamate to tRNA(Glu) in a two-step reaction: glutamate is first activated by ATP to form Glu-AMP and then transferred to the acceptor end of tRNA(Glu). The protein is Glutamate--tRNA ligase of Cupriavidus metallidurans (strain ATCC 43123 / DSM 2839 / NBRC 102507 / CH34) (Ralstonia metallidurans).